Here is a 233-residue protein sequence, read N- to C-terminus: C-type lectin domain-containing protein 87 (233 aa).

A signal peptide spans 1–20; it reads MRFFRFLVFPVIAGLSSVLA. A glycan (N-linked (GlcNAc...) asparagine) is linked at N26. Residue S32 is glycosylated (O-linked (Xyl...) (chondroitin sulfate) serine). N81 carries an N-linked (GlcNAc...) asparagine glycan. A C-type lectin domain is found at 93-223; sequence FADSCYWIET…CTYLLYSICE (131 aa). 2 disulfides stabilise this stretch: C114-C222 and C193-C214. The N-linked (GlcNAc...) asparagine glycan is linked to N225.

This chain is C-type lectin domain-containing protein 87, found in Caenorhabditis briggsae.